An 825-amino-acid polypeptide reads, in one-letter code: Probable ATP-dependent RNA helicase DDX20 (825 aa).

The tract at residues 27–50 (PVQAVEPTPASPWTQRTAHDIGGP) is disordered. A Q motif motif is present at residues 63–91 (ADFESLLLSRPVLEGLRAAGFERPSPVQL). ATP is bound by residues R85, Q90, 107–114 (AKSGTGKT), and 110–115 (GTGKTC). Residues 94 to 265 (IPLGRCGLDL…TRYMRDPTFV (172 aa)) form the Helicase ATP-binding domain. S188 bears the Phosphoserine mark. Positions 212 to 215 (DEAD) match the DEAD box motif. S270 carries the phosphoserine modification. In terms of domain architecture, Helicase C-terminal spans 300 to 449 (HLQELFSKVP…PIPPGLMEEC (150 aa)). Polar residues-rich tracts occupy residues 465 to 475 (SPTVATQSPKK) and 484 to 504 (FQSQ…SASA). Disordered regions lie at residues 465 to 573 (SPTV…PGSL) and 642 to 753 (QMLV…EPQE). Phosphoserine is present on residues S472, S501, and S506. Residues 508-518 (RPKHSKPKLPV) are compositionally biased toward basic residues. Polar residues predominate over residues 547-571 (KNSVQTSVEDSSSNSQHQAKDSSPG). T552 carries the phosphothreonine modification. 7 positions are modified to phosphoserine: S561, S653, S655, S657, S673, S678, and S679. The segment covering 646–668 (SSSQSGDSESDSDSCSSRTSSQS) has biased composition (low complexity). A phosphothreonine mark is found at T689 and T706. The segment covering 698 to 711 (EQVQNGNDTPTQVE) has biased composition (polar residues). A compositionally biased stretch (basic residues) spans 733 to 744 (KQSRRNPARRSS).

This sequence belongs to the DEAD box helicase family. DDX20 subfamily. In terms of assembly, part of the core SMN complex that contains SMN1, GEMIN2/SIP1, DDX20/GEMIN3, GEMIN4, GEMIN5, GEMIN6, GEMIN7, GEMIN8 and STRAP/UNRIP. Part of the SMN-Sm complex that contains SMN1, GEMIN2/SIP1, DDX20/GEMIN3, GEMIN4, GEMIN5, GEMIN6, GEMIN7, GEMIN8, STRAP/UNRIP and the Sm proteins SNRPB, SNRPD1, SNRPD2, SNRPD3, SNRPE, SNRPF and SNRPG. Interacts with SMN1; the interaction is direct. Interacts with GEMIN4; the interaction is direct. Interacts with GEMIN5. Interacts with SNUPN; the interaction is direct. Interacts with PPP4R2. Interacts with FOXL2. Interacts with NANOS1 and PUM2.

It is found in the cytoplasm. Its subcellular location is the nucleus. The protein localises to the gem. The catalysed reaction is ATP + H2O = ADP + phosphate + H(+). It carries out the reaction a ribonucleoside 5'-triphosphate + H2O = a ribonucleoside 5'-diphosphate + phosphate + H(+). In terms of biological role, the SMN complex catalyzes the assembly of small nuclear ribonucleoproteins (snRNPs), the building blocks of the spliceosome, and thereby plays an important role in the splicing of cellular pre-mRNAs. Most spliceosomal snRNPs contain a common set of Sm proteins SNRPB, SNRPD1, SNRPD2, SNRPD3, SNRPE, SNRPF and SNRPG that assemble in a heptameric protein ring on the Sm site of the small nuclear RNA to form the core snRNP (Sm core). In the cytosol, the Sm proteins SNRPD1, SNRPD2, SNRPE, SNRPF and SNRPG are trapped in an inactive 6S pICln-Sm complex by the chaperone CLNS1A that controls the assembly of the core snRNP. To assemble core snRNPs, the SMN complex accepts the trapped 5Sm proteins from CLNS1A forming an intermediate. Binding of snRNA inside 5Sm triggers eviction of the SMN complex, thereby allowing binding of SNRPD3 and SNRPB to complete assembly of the core snRNP. May also play a role in the metabolism of small nucleolar ribonucleoprotein (snoRNPs). The sequence is that of Probable ATP-dependent RNA helicase DDX20 (Ddx20) from Mus musculus (Mouse).